The following is a 285-amino-acid chain: E2F-associated phosphoprotein (285 aa).

M1 carries the post-translational modification N-acetylmethionine. Residues 1–30 (MNRLPDDYDPYAVEEPSDEEPALSSSEDEV) are disordered. Acidic residues predominate over residues 15–30 (EPSDEEPALSSSEDEV). The residue at position 17 (S17) is a Phosphoserine. T37 bears the Phosphothreonine mark. The disordered stretch occupies residues 48-96 (CLTGESESSSEDEFEKEMEAELNSTMKTMEDKLSSLGTGSSSGNGKVAT). The span at 55 to 67 (SSSEDEFEKEMEA) shows a compositional bias: acidic residues. Residues 81 to 92 (SSLGTGSSSGNG) show a composition bias toward low complexity. 2 positions are modified to phosphoserine: S109 and S111. The interval 118 to 144 (VQVTKKKKKKQHKIPTNDELLYDPEKD) is disordered. Positions 121–130 (TKKKKKKQHK) are enriched in basic residues.

In terms of assembly, interacts with E2F1. The C-terminal half binds the N-terminal of E2F1. Also interacts with E2F2 and E2F3, but not E2F4. Ubiquitously expressed. Highest levels in heart, placenta, skeletal muscle and pancreas. Lower levels in brain, lung and kidney. In the brain, expressed in all regions with high levels in the cerebellum and cerebral cortex. Expressed in COS1 and transformed skin fibroblasts.

It localises to the cytoplasm. Its subcellular location is the nucleus. Its function is as follows. May play an important role in the fine-tuning of both major E2F1 activities, the regulation of the cell-cycle and the induction of apoptosis. Promotes S-phase entry, and inhibits p14(ARP) expression. This is E2F-associated phosphoprotein (EAPP) from Homo sapiens (Human).